A 172-amino-acid chain; its full sequence is Large ribosomal subunit protein uL10 (172 aa).

It belongs to the universal ribosomal protein uL10 family. In terms of assembly, part of the ribosomal stalk of the 50S ribosomal subunit. The N-terminus interacts with L11 and the large rRNA to form the base of the stalk. The C-terminus forms an elongated spine to which L12 dimers bind in a sequential fashion forming a multimeric L10(L12)X complex.

Forms part of the ribosomal stalk, playing a central role in the interaction of the ribosome with GTP-bound translation factors. The chain is Large ribosomal subunit protein uL10 from Rhodopseudomonas palustris (strain TIE-1).